A 64-amino-acid chain; its full sequence is Large ribosomal subunit protein bL33m (64 aa).

Belongs to the bacterial ribosomal protein bL33 family. As to quaternary structure, component of the mitochondrial ribosome large subunit (39S) which comprises a 16S rRNA and about 50 distinct proteins.

The protein localises to the mitochondrion. The protein is Large ribosomal subunit protein bL33m (mRpL33) of Drosophila melanogaster (Fruit fly).